Consider the following 445-residue polypeptide: KIN17-like protein (445 aa).

The C2H2-type zinc finger occupies 26–50; sequence WYCQLCEKQCRDENGFKCHISSESH. 2 stretches are compositionally biased toward low complexity: residues 215–229 and 239–253; these read NTTT…TTTN and NDNN…DQTN. Positions 215-256 are disordered; the sequence is NTTTTTTNTTTTTTNKNIFDKLKTNDNNSSNNNYNDQTNPKP.

The protein belongs to the KIN17 family.

This is KIN17-like protein from Dictyostelium discoideum (Social amoeba).